A 426-amino-acid polypeptide reads, in one-letter code: MLDAKYIKDNLEEVAEKLATRGYQFDIAEFKAQEAKRKDLQERTQELQSQRNTISKEIGKRKSKGEDASDIFAKVNDINDELKVIEKVLKDLQDCINNTLLSMPNLPADDVPVGKDESENVEIKKWGTPREFHPEAQAKDHADIGEILNMIDFKAAAKITGSRFVVLKSKIAKLHRALTQFMLDMHTEKHGYEELYVPYMVNNDSLYGTGQLPKFSEDLFKLEGDFEYSLIPTAEVPITNLVRDEILDTESLPRYYTAHTPCFRSEAGSYGRDTKGLIRQHQFEKVELVHITIADKGEESLELLTSHAEKVLQKLNLPYRVVKLCTGDMGFSAKKTYDLEVWIPSQNTYREISSCSWCGDFQARRMKARHKNPSMKKPELVHTLNGSGLAVGRTLLAIIENYQQEDGSIMIPEALINYMGGISVIK.

233–235 (TAE) contributes to the L-serine binding site. Residue 264 to 266 (RSE) participates in ATP binding. Glutamate 287 lines the L-serine pocket. 351 to 354 (EISS) is an ATP binding site. Serine 387 lines the L-serine pocket.

This sequence belongs to the class-II aminoacyl-tRNA synthetase family. Type-1 seryl-tRNA synthetase subfamily. As to quaternary structure, homodimer. The tRNA molecule binds across the dimer.

Its subcellular location is the cytoplasm. It catalyses the reaction tRNA(Ser) + L-serine + ATP = L-seryl-tRNA(Ser) + AMP + diphosphate + H(+). It carries out the reaction tRNA(Sec) + L-serine + ATP = L-seryl-tRNA(Sec) + AMP + diphosphate + H(+). It participates in aminoacyl-tRNA biosynthesis; selenocysteinyl-tRNA(Sec) biosynthesis; L-seryl-tRNA(Sec) from L-serine and tRNA(Sec): step 1/1. Functionally, catalyzes the attachment of serine to tRNA(Ser). Is also able to aminoacylate tRNA(Sec) with serine, to form the misacylated tRNA L-seryl-tRNA(Sec), which will be further converted into selenocysteinyl-tRNA(Sec). This chain is Serine--tRNA ligase, found in Francisella philomiragia subsp. philomiragia (strain ATCC 25017 / CCUG 19701 / FSC 153 / O#319-036).